The sequence spans 475 residues: 7-dehydrocholesterol reductase (475 aa).

The tract at residues 1–21 (MAAKSQPSAPKTKSTSGLTNG) is disordered. Ser14 carries the post-translational modification Phosphoserine. 6 helical membrane-spanning segments follow: residues 40-60 (LASV…FIMA), 151-173 (WLLT…PTII), 178-200 (IPLL…VKGY), 266-286 (VTNS…DFFW), 306-326 (LGWG…LYLV), and 331-351 (QLPT…YYIF). Residues Lys358, Arg362, Leu395, Trp400, and 407–408 (NY) contribute to the NADP(+) site. Residues 420-440 (LACGGGHLLPYFYIIFMAILL) form a helical membrane-spanning segment. Residues Asp447, 451–455 (CANKY), and Tyr462 contribute to the NADP(+) site.

Belongs to the ERG4/ERG24 family. In terms of assembly, interacts with DHCR24; this interaction regulates DHCR7 activity. Interacts with TMEM147.

It is found in the endoplasmic reticulum membrane. It catalyses the reaction cholesterol + NADP(+) = 7-dehydrocholesterol + NADPH + H(+). It carries out the reaction 7-dehydrodesmosterol + NADPH + H(+) = desmosterol + NADP(+). The enzyme catalyses 5,6alpha-epoxy-5alpha-cholestan-3beta-ol + H2O = 5alpha-cholestane-3beta,5,6beta-triol. The catalysed reaction is 5,6beta-epoxy-5beta-cholestan-3beta-ol + H2O = 5alpha-cholestane-3beta,5,6beta-triol. Its pathway is steroid biosynthesis; cholesterol biosynthesis. Its function is as follows. Oxidoreductase that catalyzes the last step of the cholesterol synthesis pathway, which transforms cholesta-5,7-dien-3beta-ol (7-dehydrocholesterol,7-DHC) into cholesterol by reducing the C7-C8 double bond of its sterol core. Can also metabolize cholesta-5,7,24-trien-3beta-ol (7-dehydrodemosterol, 7-DHD) to desmosterol, which is then metabolized by the Delta(24)-sterol reductase (DHCR24) to cholesterol. Modulates ferroptosis (a form of regulated cell death driven by iron-dependent lipid peroxidation) through the metabolic breakdown of the anti-ferroptotic metabolites 7-DHC and 7-DHD which, when accumulated, divert the propagation of peroxyl radical-mediated damage from phospholipid components to its sterol core, protecting plasma and mitochondrial membranes from phospholipid autoxidation. Component of the microsomal antiestrogen binding site (AEBS), a multiproteic complex at the ER membrane that consists of an association between cholestenol Delta-isomerase/EBP and DHCR7. This complex is responsible for cholesterol-5,6-epoxide hydrolase (ChEH) activity, which consists in the hydration of cholesterol-5,6-epoxides (5,6-EC) into cholestane-3beta,5alpha,6beta-triol (CT). The precise role of each component of this complex has not been described yet. The protein is 7-dehydrocholesterol reductase (DHCR7) of Bos taurus (Bovine).